A 388-amino-acid chain; its full sequence is S-adenosylmethionine synthase (388 aa).

Histidine 16 contacts ATP. Aspartate 18 serves as a coordination point for Mg(2+). Glutamate 44 provides a ligand contact to K(+). Glutamate 57 and glutamine 100 together coordinate L-methionine. The segment at 100–110 (QSPEIAQGVDR) is flexible loop. ATP contacts are provided by residues 165–167 (DAK), aspartate 240, 246–247 (RK), alanine 263, and lysine 267. Aspartate 240 is a binding site for L-methionine. Lysine 271 is a binding site for L-methionine.

Belongs to the AdoMet synthase family. In terms of assembly, homotetramer; dimer of dimers. Requires Mg(2+) as cofactor. The cofactor is K(+).

The protein resides in the cytoplasm. It catalyses the reaction L-methionine + ATP + H2O = S-adenosyl-L-methionine + phosphate + diphosphate. It functions in the pathway amino-acid biosynthesis; S-adenosyl-L-methionine biosynthesis; S-adenosyl-L-methionine from L-methionine: step 1/1. Its function is as follows. Catalyzes the formation of S-adenosylmethionine (AdoMet) from methionine and ATP. The overall synthetic reaction is composed of two sequential steps, AdoMet formation and the subsequent tripolyphosphate hydrolysis which occurs prior to release of AdoMet from the enzyme. This is S-adenosylmethionine synthase from Acinetobacter baylyi (strain ATCC 33305 / BD413 / ADP1).